Consider the following 61-residue polypeptide: Small ribosomal subunit protein uS14 (61 aa).

Residues Cys-24, Cys-27, Cys-40, and Cys-43 each contribute to the Zn(2+) site.

Belongs to the universal ribosomal protein uS14 family. Zinc-binding uS14 subfamily. As to quaternary structure, part of the 30S ribosomal subunit. Contacts proteins S3 and S10. The cofactor is Zn(2+).

In terms of biological role, binds 16S rRNA, required for the assembly of 30S particles and may also be responsible for determining the conformation of the 16S rRNA at the A site. The sequence is that of Small ribosomal subunit protein uS14 from Mycoplasmopsis pulmonis (strain UAB CTIP) (Mycoplasma pulmonis).